The following is a 119-amino-acid chain: Phosphoribosyl-AMP cyclohydrolase (119 aa).

Residue aspartate 77 coordinates Mg(2+). Zn(2+) is bound at residue cysteine 78. Residues aspartate 79 and aspartate 81 each coordinate Mg(2+). Zn(2+)-binding residues include cysteine 94 and cysteine 101.

Belongs to the PRA-CH family. In terms of assembly, homodimer. Mg(2+) serves as cofactor. Zn(2+) is required as a cofactor.

Its subcellular location is the cytoplasm. The enzyme catalyses 1-(5-phospho-beta-D-ribosyl)-5'-AMP + H2O = 1-(5-phospho-beta-D-ribosyl)-5-[(5-phospho-beta-D-ribosylamino)methylideneamino]imidazole-4-carboxamide. It participates in amino-acid biosynthesis; L-histidine biosynthesis; L-histidine from 5-phospho-alpha-D-ribose 1-diphosphate: step 3/9. Catalyzes the hydrolysis of the adenine ring of phosphoribosyl-AMP. In Cereibacter sphaeroides (strain ATCC 17029 / ATH 2.4.9) (Rhodobacter sphaeroides), this protein is Phosphoribosyl-AMP cyclohydrolase.